The chain runs to 384 residues: Transcription factor iacI (384 aa).

Its subcellular location is the nucleus. Transcription factor; part of the gene cluster that mediates the biosynthesis of iso-A82775C, a enylepoxycyclohexane and biosynthetic precursor of the chloropestolide anticancer natural products. The sequence is that of Transcription factor iacI from Pestalotiopsis fici (strain W106-1 / CGMCC3.15140).